The sequence spans 113 residues: Putative pterin-4-alpha-carbinolamine dehydratase (113 aa).

The protein belongs to the pterin-4-alpha-carbinolamine dehydratase family.

It carries out the reaction (4aS,6R)-4a-hydroxy-L-erythro-5,6,7,8-tetrahydrobiopterin = (6R)-L-erythro-6,7-dihydrobiopterin + H2O. The chain is Putative pterin-4-alpha-carbinolamine dehydratase from Rickettsia bellii (strain OSU 85-389).